We begin with the raw amino-acid sequence, 2871 residues long: Desmoplakin (2871 aa).

The interaction with PKP1, JUP, PKP2 stretch occupies residues 1–584; the sequence is MSCNGGSHPR…DYMKTIADLE (584 aa). Residues 1 to 1056 are globular 1; that stretch reads MSCNGGSHPR…ANSENCNKNK (1056 aa). Ser22 and Ser53 each carry phosphoserine. Tyr56 carries the phosphotyrosine modification. A Phosphothreonine modification is found at Thr61. Phosphoserine occurs at positions 165, 166, and 176. 2 Spectrin repeats span residues 178–271 and 272–375; these read SGWD…HLRQ and LQNI…LKEN. The Spectrin 3a repeat unit spans residues 376–446; it reads AAYFQFFEEA…NLVNKSKKIV (71 aa). The 58-residue stretch at 458–515 folds into the SH3 domain; it reads NKPIILRALCDYKQDQKIVHKGDECILKDNNERSKWYVTGPGGVDMLVPSVGLIIPPP. A Spectrin 3b repeat occupies 516 to 545; the sequence is NPLAVDLSCKIEQYYEAILALWNQLYINMK. Spectrin repeat units follow at residues 546–627, 654–769, and 770–883; these read SLVS…IQLP, VIET…SLCT, and VRAL…DLEK. Residues 1018-1945 are a coiled coil; the sequence is SEMLKSLEDL…QREIDKLRQR (928 aa). The central fibrous rod domain stretch occupies residues 1057-1945; sequence FLDQNLQKYQ…QREIDKLRQR (889 aa). 3 positions are modified to phosphoserine: Ser1658, Ser1708, and Ser2024. Residues 1946 to 2871 form a globular 2 region; sequence PYGSHRETQT…YSFSSSSIGH (926 aa). Residues 1960-2208 are 4.5 X 38 AA tandem repeats (Domain A); that stretch reads TVDTSKLVFD…LLLSVQKRSM (249 aa). Plectin repeat units lie at residues 2009–2045, 2046–2083, 2084–2121, 2122–2159, 2163–2197, 2198–2233, 2251–2288, 2289–2326, 2327–2364, 2365–2402, 2406–2440, 2456–2493, 2507–2544, 2610–2647, 2648–2685, 2724–2761, and 2762–2799; these read QPFLRGAGSIAGASASPKEKYSLVEAKRKKLISPEST, VMLLEAQAATGGIIDPHRNEKLTVDSAIARDLIDFDDR, QQIYAAEKAITGFDDPFSGKTVSVSEAIKKNLIDRETG, MRLLEAQIASGGVVDPVNSVFLPKDVALARGLIDRDLY, NDPRDSQKNFVDPVTKKKVSYVQLKERCRIEPHTG, LLLLSVQKRSMSFQGIRQPVTVTELVDSGILRPSTV, KDFLQGSSCIAGIYNETTKQKLGIYEAMKIGLVRPGTA, LELLEAQAATGFIVDPVSNLRLPVEEAYKRGLVGIEFK, EKLLSAERAVTGYNDPETGNIISLFQAMNKELIEKGHG, IRLLEAQIATGGIIDPKESHRLPVDIAYKRGYFNEELS, SDPSDDTKGFFDPNTEENLTYLQLKERCIKDEETG, SQKNTLRKRRVVIVDPETNKEMSVQEAYKKGLIDYETF, TITGSDGSTRVVLVDRKTGSQYDIQDAIDKGLVDRKFF, SDTLEESSPIAAIFDTENLEKISITEGIERGIVDSITG, QRLLEAQACTGGIIHPTTGQKLSLQDAVSQGVIDQDMA, QRFLEFQYLTGGLVDPEVHGRISTEEAIRKGFIDGRAA, and QRLQDTSSYAKILTCPKTKLKISYKDAINRSMVEDITG. Residues Ser2207, Ser2209, and Ser2225 each carry the phosphoserine modification. The tract at residues 2244–2446 is 4.5 X 38 AA tandem repeats (Domain B); that stretch reads DEVGERIKDF…EETGLCLLPL (203 aa). Residues 2609-2822 form a 4.5 X 38 AA tandem repeats (Domain C) region; sequence FSDTLEESSP…LPSPYNMSSA (214 aa). Phosphoserine occurs at positions 2810 and 2815. Over residues 2810 to 2823 the composition is skewed to polar residues; sequence SKGLPSPYNMSSAP. The disordered stretch occupies residues 2810-2871; the sequence is SKGLPSPYNM…YSFSSSSIGH (62 aa). At Tyr2817 the chain carries Phosphotyrosine. A phosphoserine mark is found at Ser2820, Ser2821, and Ser2825. A 6 X 4 AA tandem repeats of G-S-R-[SR] region spans residues 2824-2847; that stretch reads GSRSGSRSGSRSGSRSGSRSGSRR. Residues 2824–2847 show a composition bias toward low complexity; sequence GSRSGSRSGSRSGSRSGSRSGSRR. Omega-N-methylarginine occurs at positions 2826 and 2847. Ser2849 is subject to Phosphoserine. Thr2853 carries the post-translational modification Phosphothreonine. Residues 2856–2871 are compositionally biased toward low complexity; that stretch reads SSYSYSYSFSSSSIGH. The residue at position 2868 (Ser2868) is a Phosphoserine.

This sequence belongs to the plakin or cytolinker family. As to quaternary structure, homodimer. Interacts with COL17A1 (via cytoplasmic region). Interacts with DSC2. Interacts with PKP2. Interacts with PKP1. Interacts weakly with TMEM65. Post-translationally, phosphorylation at Ser-2849 increases association with intermediate filament cytokeratin, potentially facilitating interaction between desmosome junctions and intermediate filament architecture. As to expression, expressed in oral mucosa (at protein level). Expressed in arrector pili muscle (at protein level). Expressed in the heart in the heart (at protein level). Apparently an obligate constituent of all desmosomes. In terms of tissue distribution, resides predominantly in tissues and cells of stratified origin.

The protein localises to the cell junction. It localises to the desmosome. The protein resides in the cell membrane. It is found in the cytoplasm. Its function is as follows. Major high molecular weight protein of desmosomes. Regulates profibrotic gene expression in cardiomyocytes via activation of the MAPK14/p38 MAPK signaling cascade and increase in TGFB1 protein abundance. The chain is Desmoplakin (DSP) from Homo sapiens (Human).